A 101-amino-acid polypeptide reads, in one-letter code: Small ribosomal subunit protein uS14 (101 aa).

Residues 1-10 (MAKKSSIEKN) are compositionally biased toward basic and acidic residues. The interval 1–24 (MAKKSSIEKNNRRKRLTKNAAPKR) is disordered. Basic residues predominate over residues 11–24 (NRRKRLTKNAAPKR).

Belongs to the universal ribosomal protein uS14 family. As to quaternary structure, part of the 30S ribosomal subunit. Contacts proteins S3 and S10.

In terms of biological role, binds 16S rRNA, required for the assembly of 30S particles and may also be responsible for determining the conformation of the 16S rRNA at the A site. The polypeptide is Small ribosomal subunit protein uS14 (Rhodopseudomonas palustris (strain BisB18)).